A 290-amino-acid chain; its full sequence is Acetyl-coenzyme A carboxylase carboxyl transferase subunit beta (290 aa).

Positions 28–290 (IMTKCPKCKK…TGGEYEWLQD (263 aa)) constitute a CoA carboxyltransferase N-terminal domain. Zn(2+) is bound by residues Cys32, Cys35, Cys51, and Cys54. The C4-type zinc finger occupies 32-54 (CPKCKKIMLTKELDKNLRVCMNC).

It belongs to the AccD/PCCB family. Acetyl-CoA carboxylase is a heterohexamer composed of biotin carboxyl carrier protein (AccB), biotin carboxylase (AccC) and two subunits each of ACCase subunit alpha (AccA) and ACCase subunit beta (AccD). Zn(2+) serves as cofactor.

The protein resides in the cytoplasm. The enzyme catalyses N(6)-carboxybiotinyl-L-lysyl-[protein] + acetyl-CoA = N(6)-biotinyl-L-lysyl-[protein] + malonyl-CoA. Its pathway is lipid metabolism; malonyl-CoA biosynthesis; malonyl-CoA from acetyl-CoA: step 1/1. Its function is as follows. Component of the acetyl coenzyme A carboxylase (ACC) complex. Biotin carboxylase (BC) catalyzes the carboxylation of biotin on its carrier protein (BCCP) and then the CO(2) group is transferred by the transcarboxylase to acetyl-CoA to form malonyl-CoA. This chain is Acetyl-coenzyme A carboxylase carboxyl transferase subunit beta, found in Bacillus velezensis (strain DSM 23117 / BGSC 10A6 / LMG 26770 / FZB42) (Bacillus amyloliquefaciens subsp. plantarum).